Here is a 379-residue protein sequence, read N- to C-terminus: Cytochrome b (379 aa).

Helical transmembrane passes span F33–M53, W77–I98, W113–L133, and F178–L198. The heme b site is built by H83 and H97. Residues H182 and H196 each contribute to the heme b site. A ubiquinone is bound at residue H201. 4 helical membrane passes run Y226–Y246, L288–H308, A320–G340, and Y347–P367.

This sequence belongs to the cytochrome b family. In terms of assembly, the cytochrome bc1 complex contains 3 respiratory subunits (MT-CYB, CYC1 and UQCRFS1), 2 core proteins (UQCRC1 and UQCRC2) and probably 6 low-molecular weight proteins. Heme b serves as cofactor.

Its subcellular location is the mitochondrion inner membrane. Component of the ubiquinol-cytochrome c reductase complex (complex III or cytochrome b-c1 complex) that is part of the mitochondrial respiratory chain. The b-c1 complex mediates electron transfer from ubiquinol to cytochrome c. Contributes to the generation of a proton gradient across the mitochondrial membrane that is then used for ATP synthesis. The polypeptide is Cytochrome b (mt-cyb) (Anguilla interioris (Highlands long-finned eel)).